A 351-amino-acid polypeptide reads, in one-letter code: Mediator of RNA polymerase II transcription subunit 18 (351 aa).

Positions 153–231 (GNGDPIDIDT…LPQSLSNGVS (79 aa)) are disordered. A compositionally biased stretch (basic and acidic residues) spans 163–204 (NNDKQGDNNTDKPKQEHDGKLPEAIDEDIIKNGDEKKTTHDD). A compositionally biased stretch (acidic residues) spans 205–216 (NDSDIMEIDEPN). Over residues 217–231 (PETQTLPQSLSNGVS) the composition is skewed to polar residues.

It belongs to the Mediator complex subunit 18 family. As to quaternary structure, component of the Mediator complex.

It is found in the nucleus. Component of the Mediator complex, a coactivator involved in the regulated transcription of nearly all RNA polymerase II-dependent genes. Mediator functions as a bridge to convey information from gene-specific regulatory proteins to the basal RNA polymerase II transcription machinery. Mediator is recruited to promoters by direct interactions with regulatory proteins and serves as a scaffold for the assembly of a functional preinitiation complex with RNA polymerase II and the general transcription factors. This is Mediator of RNA polymerase II transcription subunit 18 (SRB5) from Candida albicans (strain SC5314 / ATCC MYA-2876) (Yeast).